The primary structure comprises 90 residues: Conotoxin Rg9.1 (90 aa).

The signal sequence occupies residues 1-20 (MHLSLARSAVLILLLLFALG). Residues 21–60 (NFVGVQPGQITRDADHGINLRSLRKQMSRSPLVKGAFCGQ) constitute a propeptide that is removed on maturation. 3 cysteine pairs are disulfide-bonded: Cys58-Cys71, Cys62-Cys73, and Cys67-Cys80.

The protein belongs to the conotoxin P superfamily. In terms of tissue distribution, expressed by the venom duct.

It is found in the secreted. Its function is as follows. Probable neurotoxin that inhibits ion channels. The chain is Conotoxin Rg9.1 from Conus regius (Crown cone).